The sequence spans 652 residues: Acetyl-coenzyme A synthetase (652 aa).

Residues 191 to 194, threonine 311, and asparagine 335 each bind CoA; that span reads RAGR. Residues 387 to 389, 411 to 416, aspartate 500, and arginine 515 each bind ATP; these read GEP and DTWWQT. CoA is bound at residue serine 523. Arginine 526 contributes to the ATP binding site. Valine 537, histidine 539, and isoleucine 542 together coordinate Mg(2+). Arginine 584 provides a ligand contact to CoA. Position 609 is an N6-acetyllysine (lysine 609).

The protein belongs to the ATP-dependent AMP-binding enzyme family. It depends on Mg(2+) as a cofactor. In terms of processing, acetylated. Deacetylation by the SIR2-homolog deacetylase activates the enzyme.

The enzyme catalyses acetate + ATP + CoA = acetyl-CoA + AMP + diphosphate. Functionally, catalyzes the conversion of acetate into acetyl-CoA (AcCoA), an essential intermediate at the junction of anabolic and catabolic pathways. Acs undergoes a two-step reaction. In the first half reaction, Acs combines acetate with ATP to form acetyl-adenylate (AcAMP) intermediate. In the second half reaction, it can then transfer the acetyl group from AcAMP to the sulfhydryl group of CoA, forming the product AcCoA. In terms of biological role, enables the cell to use acetate during aerobic growth to generate energy via the TCA cycle, and biosynthetic compounds via the glyoxylate shunt. Acetylates CheY, the response regulator involved in flagellar movement and chemotaxis. The sequence is that of Acetyl-coenzyme A synthetase from Yersinia pestis.